The chain runs to 419 residues: Carboxypeptidase A1 (419 aa).

The first 16 residues, 1 to 16 (MRGLLVLSVLLGAVFG), serve as a signal peptide directing secretion. The propeptide at 17–110 (KEDFVGHQVL…QEQMFAFRSR (94 aa)) is activation peptide. The 294-residue stretch at 121 to 414 (TYHTLEEIYD…LALLTIMEHT (294 aa)) folds into the Peptidase M14 domain. The Zn(2+) site is built by His-179 and Glu-182. Residues 179–182 (HSRE), Arg-237, and 254–255 (NR) each bind substrate. Cys-248 and Cys-271 form a disulfide bridge. Residue His-306 coordinates Zn(2+). Residues 307-308 (SY) and Tyr-358 contribute to the substrate site. Catalysis depends on Glu-380, which acts as the Proton donor/acceptor.

The protein belongs to the peptidase M14 family. In terms of assembly, monomer. May form a complex with proelastase 2. Requires Zn(2+) as cofactor.

Its subcellular location is the secreted. It catalyses the reaction Release of a C-terminal amino acid, but little or no action with -Asp, -Glu, -Arg, -Lys or -Pro.. The enzyme catalyses leukotriene C4 + H2O = leukotriene F4 + glycine. With respect to regulation, inhibited by interaction with the S.magnifica carboxypeptidase inhibitor SmCI. Its function is as follows. Carboxypeptidase that catalyzes the release of a C-terminal amino acid, but has little or no action with -Asp, -Glu, -Arg, -Lys or -Pro. Catalyzes the conversion of leukotriene C4 to leukotriene F4 via the hydrolysis of an amide bond. The protein is Carboxypeptidase A1 of Homo sapiens (Human).